The chain runs to 354 residues: Photosystem II protein D1 3 (354 aa).

The next 3 membrane-spanning stretches (helical) occupy residues 29-46 (YIGWFGVLMIPTLLTATT), 118-133 (HFLIGVFCYMGREWEL), and 142-156 (WIAVAYSAPVAAATA). His118 lines the chlorophyll a pocket. A pheophytin a-binding site is contributed by Tyr126. [CaMn4O5] cluster is bound by residues Asp170 and Glu189. The chain crosses the membrane as a helical span at residues 197-218 (FHQLGVAGVFGGALFSAMHGSL). His198 is a binding site for chlorophyll a. A quinone contacts are provided by residues His215 and 264–265 (SF). His215 is a binding site for Fe cation. His272 serves as a coordination point for Fe cation. The helical transmembrane segment at 274 to 288 (FLAAWPVIGIWFTAL) threads the bilayer. [CaMn4O5] cluster contacts are provided by His332, Glu333, Asp342, and Ala344. Residues 345 to 354 (AVEVAPAVRG) constitute a propeptide that is removed on maturation.

The protein belongs to the reaction center PufL/M/PsbA/D family. As to quaternary structure, PSII is composed of 1 copy each of membrane proteins PsbA, PsbB, PsbC, PsbD, PsbE, PsbF, PsbH, PsbI, PsbJ, PsbK, PsbL, PsbM, PsbT, PsbX, PsbY, PsbZ, Psb30/Ycf12, peripheral proteins PsbO, CyanoQ (PsbQ), PsbU, PsbV and a large number of cofactors. It forms dimeric complexes. The D1/D2 heterodimer binds P680, chlorophylls that are the primary electron donor of PSII, and subsequent electron acceptors. It shares a non-heme iron and each subunit binds pheophytin, quinone, additional chlorophylls, carotenoids and lipids. D1 provides most of the ligands for the Mn4-Ca-O5 cluster of the oxygen-evolving complex (OEC). There is also a Cl(-1) ion associated with D1 and D2, which is required for oxygen evolution. The PSII complex binds additional chlorophylls, carotenoids and specific lipids. serves as cofactor. Tyr-161 forms a radical intermediate that is referred to as redox-active TyrZ, YZ or Y-Z. Post-translationally, C-terminally processed by CtpA; processing is essential to allow assembly of the oxygen-evolving complex and thus photosynthetic growth.

The protein resides in the cellular thylakoid membrane. It carries out the reaction 2 a plastoquinone + 4 hnu + 2 H2O = 2 a plastoquinol + O2. Photosystem II (PSII) is a light-driven water:plastoquinone oxidoreductase that uses light energy to abstract electrons from H(2)O, generating O(2) and a proton gradient subsequently used for ATP formation. It consists of a core antenna complex that captures photons, and an electron transfer chain that converts photonic excitation into a charge separation. The D1/D2 (PsbA/PsbD) reaction center heterodimer binds P680, the primary electron donor of PSII as well as several subsequent electron acceptors. The sequence is that of Photosystem II protein D1 3 from Synechococcus sp. (strain JA-3-3Ab) (Cyanobacteria bacterium Yellowstone A-Prime).